We begin with the raw amino-acid sequence, 491 residues long: Aspartyl/glutamyl-tRNA(Asn/Gln) amidotransferase subunit B (491 aa).

Belongs to the GatB/GatE family. GatB subfamily. As to quaternary structure, heterotrimer of A, B and C subunits.

It carries out the reaction L-glutamyl-tRNA(Gln) + L-glutamine + ATP + H2O = L-glutaminyl-tRNA(Gln) + L-glutamate + ADP + phosphate + H(+). The catalysed reaction is L-aspartyl-tRNA(Asn) + L-glutamine + ATP + H2O = L-asparaginyl-tRNA(Asn) + L-glutamate + ADP + phosphate + 2 H(+). In terms of biological role, allows the formation of correctly charged Asn-tRNA(Asn) or Gln-tRNA(Gln) through the transamidation of misacylated Asp-tRNA(Asn) or Glu-tRNA(Gln) in organisms which lack either or both of asparaginyl-tRNA or glutaminyl-tRNA synthetases. The reaction takes place in the presence of glutamine and ATP through an activated phospho-Asp-tRNA(Asn) or phospho-Glu-tRNA(Gln). The protein is Aspartyl/glutamyl-tRNA(Asn/Gln) amidotransferase subunit B of Prochlorococcus marinus (strain NATL2A).